A 137-amino-acid chain; its full sequence is uncharacterized protein (137 aa).

This sequence belongs to the ycf72 family.

It is found in the plastid. The protein localises to the chloroplast. This is an uncharacterized protein from Saccharum hybrid (Sugarcane).